A 175-amino-acid chain; its full sequence is Alpha-crystallin B chain (175 aa).

The residue at position 1 (Met1) is an N-acetylmethionine. 3 positions are modified to phosphoserine: Ser19, Ser45, and Ser59. The region spanning 56 to 164 (RAPSWIDTGL…PERTIPITRE (109 aa)) is the sHSP domain. His83 serves as a coordination point for Zn(2+). N6-acetyllysine is present on Lys92. Residues His104, Glu106, His111, and His119 each coordinate Zn(2+). The disordered stretch occupies residues 142–175 (VLTVNGPRKQASGPERTIPITREEKPAVTAAPKK). Lys166 bears the N6-acetyllysine mark. Thr170 is a glycosylation site (O-linked (GlcNAc) threonine).

This sequence belongs to the small heat shock protein (HSP20) family. In terms of assembly, heteromer composed of three CRYAA and one CRYAB subunits. Aggregates with homologous proteins, including the small heat shock protein HSPB1, to form large heteromeric complexes. Inter-subunit bridging via zinc ions enhances stability, which is crucial as there is no protein turn over in the lens. Interacts with HSPBAP1. Interacts with TTN/titin. Interacts with TMEM109; in the cellular response to DNA damage. Interacts with DES; binds rapidly during early stages of DES filament assembly and a reduced binding seen in the later stages. Interacts with TMED10; the interaction mediates the translocation from the cytoplasm into the ERGIC (endoplasmic reticulum-Golgi intermediate compartment) and thereby secretion. Interacts with ATP6V1A and with MTOR, forming a ternary complex. In terms of tissue distribution, lens as well as other tissues.

The protein resides in the cytoplasm. It localises to the nucleus. It is found in the secreted. The protein localises to the lysosome. May contribute to the transparency and refractive index of the lens. Has chaperone-like activity, preventing aggregation of various proteins under a wide range of stress conditions. In lens epithelial cells, stabilizes the ATP6V1A protein, preventing its degradation by the proteasome. This is Alpha-crystallin B chain from Rattus norvegicus (Rat).